A 284-amino-acid chain; its full sequence is Protoheme IX farnesyltransferase (284 aa).

8 consecutive transmembrane segments (helical) span residues 13-33, 35-55, 87-107, 108-128, 133-153, 162-182, 224-244, and 264-284; these read IIIG…FPFF, VFLF…SCIF, IFAS…VNIL, SMFL…FFLK, YSTF…HTAI, FLLF…IAIL, FLGY…FYWL, and FYYS…DFIF.

This sequence belongs to the UbiA prenyltransferase family. Protoheme IX farnesyltransferase subfamily.

Its subcellular location is the cell membrane. It catalyses the reaction heme b + (2E,6E)-farnesyl diphosphate + H2O = Fe(II)-heme o + diphosphate. It functions in the pathway porphyrin-containing compound metabolism; heme O biosynthesis; heme O from protoheme: step 1/1. Functionally, converts heme B (protoheme IX) to heme O by substitution of the vinyl group on carbon 2 of heme B porphyrin ring with a hydroxyethyl farnesyl side group. In Buchnera aphidicola subsp. Schizaphis graminum (strain Sg), this protein is Protoheme IX farnesyltransferase.